Here is a 135-residue protein sequence, read N- to C-terminus: Large ribosomal subunit protein bL12c (135 aa).

It belongs to the bacterial ribosomal protein bL12 family. In terms of assembly, homodimer. Part of the ribosomal stalk of the 50S ribosomal subunit. Forms a multimeric L10(L12)X complex, where L10 forms an elongated spine to which 2 to 4 L12 dimers bind in a sequential fashion. Binds GTP-bound translation factors.

It localises to the plastid. The protein localises to the chloroplast. Functionally, forms part of the ribosomal stalk which helps the ribosome interact with GTP-bound translation factors. Is thus essential for accurate translation. The sequence is that of Large ribosomal subunit protein bL12c from Chara vulgaris (Common stonewort).